The primary structure comprises 184 residues: FMRFamide-related peptides (184 aa).

Residues M1 to E44 constitute a propeptide that is removed on maturation. A Phenylalanine amide modification is found at F56. The propeptide occupies G59–P83. F94 is modified (phenylalanine amide). A propeptide spanning residues S97 to P107 is cleaved from the precursor. F119 bears the Phenylalanine amide mark. Positions N122–E184 are excised as a propeptide.

This sequence belongs to the FARP (FMRFamide related peptide) family. Expressed throughout the central nervous system.

Its subcellular location is the secreted. Functionally, in insects, FMRFamide and related peptides have modulatory actions at skeletal neuromuscular junctions, and peptides that are immunologically related to FMRFamide are released into the circulation from neurohemal organs. The polypeptide is FMRFamide-related peptides (Camponotus floridanus (Florida carpenter ant)).